The following is a 540-amino-acid chain: Fumonisin B1 esterase (540 aa).

The Acyl-ester intermediate role is filled by Ser240. Residues Glu356 and His448 each act as charge relay system in the active site. Residues 521 to 540 (QVGSGEGLGVSPSKACQPSK) form a disordered region.

It belongs to the type-B carboxylesterase/lipase family.

The enzyme catalyses fumonisin B1 + 2 H2O = 2 tricarballylate + (2S,3S,5R,10R,12S,14S,15R,16R)-2-amino-12,16-dimethylicosane-3,5,10,14,15-pentol + 2 H(+). Its function is as follows. Involved in degradation of fumonisin B1. Catalyzes the hydrolysis of fumonisin B1 (FB1) to aminopentol (HFB1). The chain is Fumonisin B1 esterase (fumD) from Sphingopyxis macrogoltabida (Sphingomonas macrogoltabidus).